The chain runs to 380 residues: Lipid-A-disaccharide synthase (380 aa).

It belongs to the LpxB family.

It carries out the reaction a lipid X + a UDP-2-N,3-O-bis[(3R)-3-hydroxyacyl]-alpha-D-glucosamine = a lipid A disaccharide + UDP + H(+). It functions in the pathway bacterial outer membrane biogenesis; LPS lipid A biosynthesis. Condensation of UDP-2,3-diacylglucosamine and 2,3-diacylglucosamine-1-phosphate to form lipid A disaccharide, a precursor of lipid A, a phosphorylated glycolipid that anchors the lipopolysaccharide to the outer membrane of the cell. This is Lipid-A-disaccharide synthase from Francisella tularensis subsp. tularensis (strain FSC 198).